The sequence spans 937 residues: MORC family CW-type zinc finger protein 4 (937 aa).

The segment at 420–472 (KVPDQTWVQCDECLKWRKLPGKIDPSMLPARWFCYYNSHPKYRRCSVPEEQEL) adopts a CW-type zinc-finger fold. Positions 429, 432, 453, and 464 each coordinate Zn(2+). Residues 606 to 637 (PEGENSHDKSSSERSTPPYLFPEYPEASKNTG) form a disordered region. Positions 762 to 876 (KLKNQRELEE…LEMLQKAQVS (115 aa)) form a coiled coil.

Expressed at low levels in normal tissues, with highest expression levels in placenta and testis. Expression is significantly increased in subset of diffuse large B-cell lymphomas.

It is found in the nucleus. Its function is as follows. Histone methylation reader which binds to non-methylated (H3K4me0), monomethylated (H3K4me1), dimethylated (H3K4me2) and trimethylated (H3K4me3) 'Lys-4' on histone H3. The order of binding preference is H3K4me3 &gt; H3K4me2 &gt; H3K4me1 &gt; H3K4me0. The chain is MORC family CW-type zinc finger protein 4 (MORC4) from Homo sapiens (Human).